The following is a 352-amino-acid chain: Phosphoribosylformylglycinamidine cyclo-ligase (352 aa).

This sequence belongs to the AIR synthase family.

It is found in the cytoplasm. It carries out the reaction 2-formamido-N(1)-(5-O-phospho-beta-D-ribosyl)acetamidine + ATP = 5-amino-1-(5-phospho-beta-D-ribosyl)imidazole + ADP + phosphate + H(+). It functions in the pathway purine metabolism; IMP biosynthesis via de novo pathway; 5-amino-1-(5-phospho-D-ribosyl)imidazole from N(2)-formyl-N(1)-(5-phospho-D-ribosyl)glycinamide: step 2/2. This is Phosphoribosylformylglycinamidine cyclo-ligase from Teredinibacter turnerae (strain ATCC 39867 / T7901).